A 528-amino-acid polypeptide reads, in one-letter code: MYPNSPSQGRIPLPLPCEQQQPPLEQSQEQPLQPQPLQPQQASGYLSKLPVSVAPELLSPEQFIQASINLHNNVNFARMLMNANLLAVPPVSPPPWSYRDQSPLISPASPSSSFQNRKRRSDEGNIAYDVKRQKFQSPQEQTVNHQAVPLRGDLGCSYPGSPAFPLLQSPSPPVLKGHVPNSGECWLYDHVDTTLPVAKDKLSKQILELFQALQQQVCDLKKKDICRAELQREIQQIFPQSRLYLVGSSLNGFGTRSSDADLCLVLKDEPMNQHTEARHILSLLHKHFYTRLSYIERPQFIKAKVPIVKFRDKVSGAEFDLNVNNVVGIRNTFLLRTYAYIENRVRPLVLVIKMWANYHGLNDASRGTLSSYTLVLMALHYLQTLPEPIIPSLQKKYPECFDSTMQLHLVHHAPRNIPKYLSKNETPLGDLLLGFLKYFAIEFDWSKDIISVREAKALPRSDDYEWRNKFICVEEPYDRTNTARAVYERQKFDMIRAEFLRAWVALRDNRDLYSLLPWKGIMKKMNSL.

2 disordered regions span residues 1–41 (MYPN…QPQQ) and 99–121 (RDQSPLISPASPSSSFQNRKRRS). Low complexity-rich tracts occupy residues 16–32 (PCEQQQPPLEQSQEQPL) and 102–113 (SPLISPASPSSS). The Mg(2+) site is built by D259 and D261. Positions 428 to 481 (LGDLLLGFLKYFAIEFDWSKDIISVREAKALPRSDDYEWRNKFICVEEPYDRTN) constitute a PAP-associated domain.

Belongs to the DNA polymerase type-B-like family. GLD2 subfamily. Component of a complex at least composed of cpeb1, cpsf1, tent2/gld2, pabpc1/ePAB, parn and sympk. Following oocyte maturation, parn is expelled from the complex. Interacts with rbm9 and sympk. Mg(2+) serves as cofactor. The cofactor is Mn(2+).

The protein localises to the cytoplasm. The enzyme catalyses RNA(n) + ATP = RNA(n)-3'-adenine ribonucleotide + diphosphate. In terms of biological role, cytoplasmic poly(A) RNA polymerase that adds successive AMP monomers to the 3'-end of specific RNAs, forming a poly(A) tail. In contrast to the canonical nuclear poly(A) RNA polymerase, it only adds poly(A) to selected cytoplasmic mRNAs during oocyte maturation. Plays a central role during oocyte maturation by mediating polyadenylation of dormant mRNAs, which contain 5'AAUAAA-3' sequence in their 3'-UTR. In immature oocytes, polyadenylation of poly(A) tails is counteracted by the ribonuclease parn. During maturation parn is excluded from the ribonucleoprotein complex, allowing poly(A) elongation and activation of mRNAs. May not play a role in replication-dependent histone mRNA degradation. In Xenopus tropicalis (Western clawed frog), this protein is Poly(A) RNA polymerase GLD2 (tent2).